The following is a 127-amino-acid chain: Large ribosomal subunit protein bL19 (127 aa).

Belongs to the bacterial ribosomal protein bL19 family.

This protein is located at the 30S-50S ribosomal subunit interface and may play a role in the structure and function of the aminoacyl-tRNA binding site. The chain is Large ribosomal subunit protein bL19 from Synechococcus sp. (strain JA-3-3Ab) (Cyanobacteria bacterium Yellowstone A-Prime).